Reading from the N-terminus, the 433-residue chain is ATP-sensitive inward rectifier potassium channel 12 (433 aa).

At 1 to 77 (MTAASRANPY…LADMFTTCVD (77 aa)) the chain is on the cytoplasmic side. At cysteine 75 the chain carries S-nitrosocysteine. The chain crosses the membrane as a helical span at residues 78 to 104 (IRWRYMLLIFSLAFLASWLLFGIIFWV). Arginine 79 and arginine 81 together coordinate a 1,2-diacyl-sn-glycero-3-phospho-(1D-myo-inositol-4,5-bisphosphate). The Extracellular portion of the chain corresponds to 105–129 (IAVAHGDLEPAEGRGRTPCVMQVHG). A disulfide bond links cysteine 123 and cysteine 155. Positions 130–146 (FMAAFLFSIETQTTIGY) form an intramembrane region, helical; Pore-forming. K(+)-binding residues include threonine 143, isoleucine 144, glycine 145, and tyrosine 146. Residues 143–148 (TIGYGL) carry the Selectivity filter motif. Residues 147–155 (GLRCVTEEC) lie on the Extracellular side of the membrane. Residues 156–183 (PVAVFMVVAQSIVGCIIDSFMIGAIMAK) traverse the membrane as a helical segment. Residues lysine 183 and lysine 188 each contribute to the a 1,2-diacyl-sn-glycero-3-phospho-(1D-myo-inositol-4,5-bisphosphate) site. Residues 184 to 433 (MARPKKRAQT…QRPYRRESEI (250 aa)) are Cytoplasmic-facing. A disordered region spans residues 387–433 (DEEDEADGDQDGRSRDGLSPQARHDFDRLQAGGGVLEQRPYRRESEI). Positions 396 to 414 (QDGRSRDGLSPQARHDFDR) are enriched in basic and acidic residues. The PDZ-binding signature appears at 431–433 (SEI).

The protein belongs to the inward rectifier-type potassium channel (TC 1.A.2.1) family. KCNJ12 subfamily. Homotetramer. Forms heteromer with KCNJ4. Can form heteromeric channels with Kir2.6/KCNJ18. Association, via its PDZ-recognition domain, with LIN7A, LIN7B, LIN7C, DLG1, CASK and APBA1 plays a key role in its localization and trafficking.

Its subcellular location is the membrane. It is found in the cell membrane. It localises to the sarcolemma. The protein localises to the T-tubule. The enzyme catalyses K(+)(in) = K(+)(out). Activated by phosphatidylinositol 4,5-biphosphate (PtdIns(4,5)P2). PtdIns(4,5)P2 binding to the cytoplasmic side of the channel triggers a conformation change leading to channel opening. Inhibited by Ba(2+). Its function is as follows. Inward rectifying potassium channel that probably participates in controlling the resting membrane potential in electrically excitable cells. Probably participates in establishing action potential waveform and excitability of neuronal and muscle tissues. Inward rectifier potassium channels are characterized by a greater tendency to allow potassium to flow into the cell rather than out of it. Their voltage dependence is regulated by the concentration of extracellular potassium; as external potassium is raised, the voltage range of the channel opening shifts to more positive voltages. The inward rectification is mainly due to the blockage of outward current by internal magnesium. The chain is ATP-sensitive inward rectifier potassium channel 12 (KCNJ12) from Homo sapiens (Human).